Reading from the N-terminus, the 116-residue chain is Propanediol dehydratase-reactivating factor small subunit (116 aa).

Glu31 provides a ligand contact to Mg(2+).

The protein belongs to the DdrB/PduH family. Forms a heterotetramer PduG(2)/PduH(2). Mg(2+) serves as cofactor.

It localises to the bacterial microcompartment. It catalyses the reaction ATP + H2O = ADP + phosphate + H(+). Its pathway is polyol metabolism; 1,2-propanediol degradation. Its function is as follows. Small subunit of the propanediol dehydratase-reactivating factor (DDR), which reactivates suicidally inhibited adenosylcobalamin-dependent propanediol dehydratase (diol dehydratase, DDH) found in the bacterial microcompartment (BMC) dedicated to 1,2-propanediol (1,2-PD) degradation. Reactivates inactivated DDH in the presence of ATP, Mg(2+) and free adenosylcobalamin (AdoCbl), by mediating the exchange of the tightly bound damaged cofactor AdoCbl for a free intact one. In terms of biological role, the 1,2-PD-specific bacterial microcompartment (BMC) concentrates low levels of 1,2-PD catabolic enzymes, concentrates volatile reaction intermediates thus enhancing pathway flux and keeps the level of toxic, mutagenic propionaldehyde low. This is Propanediol dehydratase-reactivating factor small subunit from Salmonella typhimurium (strain LT2 / SGSC1412 / ATCC 700720).